The chain runs to 461 residues: High-affinity Na(+)/H(+) antiporter NhaS3 (461 aa).

11 helical membrane-spanning segments follow: residues 22-42 (TEIA…IYFA), 58-78 (VLGE…LLLF), 113-133 (SEVI…EIGL), 148-170 (AIVA…MTIF), 175-197 (IPAI…KVLA), 209-229 (IIIG…AVVG), 239-259 (ISNI…SILI), 280-300 (LLLV…IVQL), 360-380 (GLII…VTGF), 391-411 (LAIG…AGVG), and 424-444 (AIIV…RAVF).

It belongs to the monovalent cation:proton antiporter 2 (CPA2) transporter (TC 2.A.37) family.

The protein localises to the cellular thylakoid membrane. Its function is as follows. Na(+)/H(+) antiporter that transports sodium from the cytoplasm into the thylakoid lumen in exchange for protons. Contributes to sodium homeostasis and tolerance. Also has Li(+)/H(+) antiport activity under K(+)-free conditions, but not under K(+)-rich conditions. This Synechocystis sp. (strain ATCC 27184 / PCC 6803 / Kazusa) protein is High-affinity Na(+)/H(+) antiporter NhaS3 (nhaS3).